The primary structure comprises 312 residues: MMDKIIQTLTLTFTFLYYSIPMLIVGLFISQILIESNIIKKIYFIGKIFTRLANLPEECGIAITTSFIEPRMANIMLVDFYKKGIINKKELYISSLIDAFPAMLRHWDSLLPILLATLGFFGIIYFIILVLIGFIQTLIFMAIGKITLKNREYKEDNTDKKIKLNKDVVYTAFKNTIKYGIPIIRDITIASIITSFLIEFGFFDYITEIIKNKAYYLPLSVEEITVAVTQPINYIGAFVLAGEFLNRGILDEIEVVRALLLGSILSSIPALRFLAPYYIGIYGFKDGFNLMMISTLVRILITALFVIITLIL.

Helical transmembrane passes span 9 to 29 (LTLT…GLFI), 115 to 135 (LATL…IGFI), 187 to 207 (ITIA…DYIT), 224 to 244 (ITVA…AGEF), 264 to 284 (ILSS…IYGF), and 292 to 312 (MIST…TLIL).

Its subcellular location is the cell membrane. This is an uncharacterized protein from Methanocaldococcus jannaschii (strain ATCC 43067 / DSM 2661 / JAL-1 / JCM 10045 / NBRC 100440) (Methanococcus jannaschii).